The sequence spans 761 residues: Ribonucleoside-diphosphate reductase subunit alpha (761 aa).

Positions leucine 5–glycine 95 constitute an ATP-cone domain. ATP contacts are provided by residues lysine 9, glutamate 15–lysine 21, threonine 55, and lysine 91. Threonine 209 serves as a coordination point for GDP. Cysteine 225 and cysteine 462 are joined by a disulfide. Residues aspartate 232–leucine 234, arginine 262, and arginine 269 contribute to the dTTP site. Asparagine 437 is a binding site for GDP. The Proton acceptor role is filled by asparagine 437. Cysteine 439 serves as the catalytic Cysteine radical intermediate. GDP-binding positions include glutamate 441 and glutamate 623–serine 625. Glutamate 441 serves as the catalytic Proton acceptor.

It belongs to the ribonucleoside diphosphate reductase large chain family. In terms of assembly, tetramer of two alpha and two beta subunits.

The catalysed reaction is a 2'-deoxyribonucleoside 5'-diphosphate + [thioredoxin]-disulfide + H2O = a ribonucleoside 5'-diphosphate + [thioredoxin]-dithiol. Under complex allosteric control mediated by deoxynucleoside triphosphates and ATP binding to separate specificity and activation sites on the alpha subunit. The type of nucleotide bound at the specificity site determines substrate preference. It seems probable that ATP makes the enzyme reduce CDP and UDP, dGTP favors ADP reduction and dTTP favors GDP reduction. Stimulated by ATP and inhibited by dATP binding to the activity site. Provides the precursors necessary for DNA synthesis. Catalyzes the biosynthesis of deoxyribonucleotides from the corresponding ribonucleotides. The protein is Ribonucleoside-diphosphate reductase subunit alpha (nrdA) of Buchnera aphidicola subsp. Baizongia pistaciae (strain Bp).